The sequence spans 320 residues: ATP-dependent 6-phosphofructokinase (320 aa).

Glycine 12 contributes to the ATP binding site. ADP-binding positions include 22-26 and 55-60; these read RGVVR and RYSVSD. Residues 73–74 and 103–106 contribute to the ATP site; these read RF and GDGS. Aspartate 104 lines the Mg(2+) pocket. Residue 126–128 coordinates substrate; it reads TID. Catalysis depends on aspartate 128, which acts as the Proton acceptor. Position 155 (arginine 155) interacts with ADP. Substrate is bound by residues arginine 163 and 170 to 172; that span reads MGR. ADP-binding positions include 186-188, lysine 212, and 214-216; these read GCE and KKH. Substrate-binding positions include glutamate 223, arginine 244, and 250–253; that span reads HIQR.

This sequence belongs to the phosphofructokinase type A (PFKA) family. ATP-dependent PFK group I subfamily. Prokaryotic clade 'B1' sub-subfamily. As to quaternary structure, homotetramer. Mg(2+) serves as cofactor.

The protein localises to the cytoplasm. It carries out the reaction beta-D-fructose 6-phosphate + ATP = beta-D-fructose 1,6-bisphosphate + ADP + H(+). It functions in the pathway carbohydrate degradation; glycolysis; D-glyceraldehyde 3-phosphate and glycerone phosphate from D-glucose: step 3/4. Allosterically activated by ADP and other diphosphonucleosides, and allosterically inhibited by phosphoenolpyruvate. Catalyzes the phosphorylation of D-fructose 6-phosphate to fructose 1,6-bisphosphate by ATP, the first committing step of glycolysis. The polypeptide is ATP-dependent 6-phosphofructokinase (Buchnera aphidicola subsp. Baizongia pistaciae (strain Bp)).